The sequence spans 119 residues: Large ribosomal subunit protein bL20c (119 aa).

This sequence belongs to the bacterial ribosomal protein bL20 family.

It localises to the plastid. It is found in the chloroplast. Functionally, binds directly to 23S ribosomal RNA and is necessary for the in vitro assembly process of the 50S ribosomal subunit. It is not involved in the protein synthesizing functions of that subunit. In Amborella trichopoda, this protein is Large ribosomal subunit protein bL20c.